We begin with the raw amino-acid sequence, 184 residues long: MSRTAYTVGALLLLLGTLLPAAEGKKKGSQGAIPPPDKAQHNDSEQTQSPQQPGSRNRGRGQGRGTAMPGEEVLESSQEALHVTERKYLKRDWCKTQPLKQTIHEEGCNSRTIINRFCYGQCNSFYIPRHIRKEEGSFQSCSFCKPKKFTTMMVTLNCPELQPPTKKKRVTRVKQCRCISIDLD.

A signal peptide spans 1-24; sequence MSRTAYTVGALLLLLGTLLPAAEG. The segment at 24–77 is disordered; sequence GKKKGSQGAIPPPDKAQHNDSEQTQSPQQPGSRNRGRGQGRGTAMPGEEVLESS. Residue Asn-42 is glycosylated (N-linked (GlcNAc...) asparagine). 4 cysteine pairs are disulfide-bonded: Cys-94–Cys-144, Cys-108–Cys-158, Cys-118–Cys-176, and Cys-122–Cys-178. The CTCK domain maps to 94–184; it reads CKTQPLKQTI…QCRCISIDLD (91 aa).

This sequence belongs to the DAN family. In terms of assembly, homodimer; can also form homooligomers. Interacts with BMP2; can form higher oligomers with BMP2. Interacts with SLIT1 and SLIT2 in a glycosylation-dependent manner. In terms of tissue distribution, highly expressed in small intestine, fetal brain and colon. Expression is restricted to intestinal subepithelial myofibroblasts (ISEMFs) at the crypt base. In subjects with HMPS1, by contrast, GREM1 is expressed, not only in basal ISEMFs, but also at very high levels in epithelial cells (predominantly colonocytes), with expression extending most of the way up the sides of the crypt. Weakly expressed in brain, ovary, prostate, pancreas and skeletal muscle. In brain found in the region localized around the internal capsule in the large subcortical nuclei, including caudate, putamen, substantia nigra, thalamus and subthalamus. Predominantly expressed in normal cells including neurons, astrocytes and fibroblasts.

Its subcellular location is the secreted. In terms of biological role, cytokine that may play an important role during carcinogenesis and metanephric kidney organogenesis, as a BMP antagonist required for early limb outgrowth and patterning in maintaining the FGF4-SHH feedback loop. Down-regulates the BMP4 signaling in a dose-dependent manner. Antagonist of BMP2; inhibits BMP2-mediated differentiation of osteoblasts (in vitro). Acts as inhibitor of monocyte chemotaxis. Can inhibit the growth or viability of normal cells but not transformed cells when is overexpressed. This is Gremlin-1 (GREM1) from Homo sapiens (Human).